The sequence spans 120 residues: Small ribosomal subunit protein eS24 (120 aa).

Residues 101 to 120 form a disordered region; it reads RDAGTKQKKGGSKGGQGAKG.

Belongs to the eukaryotic ribosomal protein eS24 family.

The polypeptide is Small ribosomal subunit protein eS24 (Saccharolobus solfataricus (strain ATCC 35092 / DSM 1617 / JCM 11322 / P2) (Sulfolobus solfataricus)).